Reading from the N-terminus, the 41-residue chain is Large ribosomal subunit protein bL36 (41 aa).

The protein belongs to the bacterial ribosomal protein bL36 family.

The sequence is that of Large ribosomal subunit protein bL36 from Hydrogenovibrio crunogenus (strain DSM 25203 / XCL-2) (Thiomicrospira crunogena).